A 361-amino-acid polypeptide reads, in one-letter code: UDP-D-xylose:L-fucose alpha-1,3-D-xylosyltransferase 1 (361 aa).

The interval 1–21 is disordered; that stretch reads MEQKQHILKQSTFSSSPSSYS. The Cytoplasmic portion of the chain corresponds to 1-34; the sequence is MEQKQHILKQSTFSSSPSSYSSISDRPISLLSRN. The segment covering 11 to 21 has biased composition (low complexity); the sequence is STFSSSPSSYS. A helical; Signal-anchor for type II membrane protein transmembrane segment spans residues 35–55; that stretch reads GLLLLLLALVLLLGVLLPWPG. The Lumenal portion of the chain corresponds to 56–361; the sequence is SPLFLFPNRL…ALESPLGKLE (306 aa). N-linked (GlcNAc...) asparagine glycosylation is found at N92 and N167. A DXD motif motif is present at residues 190–192; that stretch reads DVD. N-linked (GlcNAc...) asparagine glycans are attached at residues N222 and N286.

The protein belongs to the glycosyltransferase 77 family. The cofactor is Mn(2+). Mg(2+) serves as cofactor. Post-translationally, glycosylated. In terms of tissue distribution, expressed in roots, rosette leaves, cauline leaves and stems.

The protein localises to the golgi apparatus membrane. In terms of biological role, catalyzes the transfer of D-xylose from UDP-alpha-D-xylose onto L-fucose. Probably involved in the biosynthesis of rhamnogalacturonan II (RG-II) through xylosylation of the internal fucose moiety of the A-chain of RG-II, a structurally complex pectic polysaccharide of the primary cell wall. RG-II is essential for the cell wall integrity of rapidly growing tissues such as roots and pollen tube growth and elongation. This Arabidopsis thaliana (Mouse-ear cress) protein is UDP-D-xylose:L-fucose alpha-1,3-D-xylosyltransferase 1.